We begin with the raw amino-acid sequence, 260 residues long: Acetylglutamate kinase (260 aa).

Substrate contacts are provided by residues 46–47, Arg-68, and Asn-160; that span reads GG.

The protein belongs to the acetylglutamate kinase family. ArgB subfamily.

It localises to the cytoplasm. The catalysed reaction is N-acetyl-L-glutamate + ATP = N-acetyl-L-glutamyl 5-phosphate + ADP. The protein operates within amino-acid biosynthesis; L-arginine biosynthesis; N(2)-acetyl-L-ornithine from L-glutamate: step 2/4. In terms of biological role, catalyzes the ATP-dependent phosphorylation of N-acetyl-L-glutamate. This chain is Acetylglutamate kinase, found in Shewanella putrefaciens (strain CN-32 / ATCC BAA-453).